Reading from the N-terminus, the 459-residue chain is tRNA modification GTPase MnmE (459 aa).

Residues R23, E85, and R124 each coordinate (6S)-5-formyl-5,6,7,8-tetrahydrofolate. Residues 221–380 enclose the TrmE-type G domain; it reads GLSTAIIGRP…LEKAIADTFF (160 aa). N231 provides a ligand contact to K(+). GTP contacts are provided by residues 231–236, 250–256, and 275–278; these read NVGKSS, TEIPGTT, and DTAG. S235 contributes to the Mg(2+) binding site. Residues T250, I252, and T255 each contribute to the K(+) site. Residue T256 participates in Mg(2+) binding. K459 lines the (6S)-5-formyl-5,6,7,8-tetrahydrofolate pocket.

It belongs to the TRAFAC class TrmE-Era-EngA-EngB-Septin-like GTPase superfamily. TrmE GTPase family. As to quaternary structure, homodimer. Heterotetramer of two MnmE and two MnmG subunits. K(+) is required as a cofactor.

It localises to the cytoplasm. In terms of biological role, exhibits a very high intrinsic GTPase hydrolysis rate. Involved in the addition of a carboxymethylaminomethyl (cmnm) group at the wobble position (U34) of certain tRNAs, forming tRNA-cmnm(5)s(2)U34. In Oceanobacillus iheyensis (strain DSM 14371 / CIP 107618 / JCM 11309 / KCTC 3954 / HTE831), this protein is tRNA modification GTPase MnmE.